Here is a 307-residue protein sequence, read N- to C-terminus: MTRHFLRDDDLSPAEQAEVLDLAVQLKRERWSERPLAGPQTVAVIFDKSSTRTRVSFAVGIADLGGVPLIISTANSQLGGKETASDTARVLERQVAAIVWRTYGQAGLEEMAAGTTVPVVNALSDDFHPCQLLADLLTIREHRGDPAGQTLTFLGDGACNMAQSYLLAGATAGMHVRIAAPAGYVPSEAVVADAERIAASTGGSVRVLTDPVEAVSGADVVVTDTWVSMGREEEKAQRLAELGAYQVTTELMEHAVDDAIFLHCLPADREYEVASEVIDGPRSVVWDEAENRLHAQKALLVWLLRQS.

Residues 50 to 53 (STRT), glutamine 77, arginine 101, and 128 to 131 (HPCQ) contribute to the carbamoyl phosphate site. L-ornithine is bound by residues asparagine 160, aspartate 224, and 228–229 (SM). Carbamoyl phosphate contacts are provided by residues 264–265 (CL) and arginine 292.

This sequence belongs to the aspartate/ornithine carbamoyltransferase superfamily. OTCase family.

The protein resides in the cytoplasm. It catalyses the reaction carbamoyl phosphate + L-ornithine = L-citrulline + phosphate + H(+). The protein operates within amino-acid biosynthesis; L-arginine biosynthesis; L-arginine from L-ornithine and carbamoyl phosphate: step 1/3. In terms of biological role, reversibly catalyzes the transfer of the carbamoyl group from carbamoyl phosphate (CP) to the N(epsilon) atom of ornithine (ORN) to produce L-citrulline. The polypeptide is Ornithine carbamoyltransferase (Clavibacter michiganensis subsp. michiganensis (strain NCPPB 382)).